We begin with the raw amino-acid sequence, 416 residues long: Cell division control protein 3 (416 aa).

Positions 32-307 (RGFSLNIMAI…ENYRTEKLKR (276 aa)) constitute a Septin-type G domain. Residues 42 to 49 (GESGLGKA) form a G1 motif region. GTP is bound by residues 42–49 (GESGLGKA), Ser79, Gly105, 184–192 (KSDTLTDEE), Gly240, and Arg256. The segment at 102-105 (TAPG) is G3 motif. The segment at 183–186 (AKSD) is G4 motif. Positions 323-399 (AAKQEEERAL…QLEKQKLLPQ (77 aa)) form a coiled coil. A disordered region spans residues 392–416 (EKQKLLPQDPPAQPAPQKSRKGFLR).

The protein belongs to the TRAFAC class TrmE-Era-EngA-EngB-Septin-like GTPase superfamily. Septin GTPase family.

It is found in the bud neck. In terms of biological role, plays a role in the cell cycle. Involved in the formation of the ring of filaments in the neck region at the mother-bud junction during mitosis. In Candida albicans (Yeast), this protein is Cell division control protein 3 (CDC3).